The sequence spans 229 residues: Small ribosomal subunit protein uS3 (229 aa).

The region spanning 39–107 (IRKFLKKELY…EVFINIKEEK (69 aa)) is the KH type-2 domain.

It belongs to the universal ribosomal protein uS3 family. In terms of assembly, part of the 30S ribosomal subunit. Forms a tight complex with proteins S10 and S14.

Binds the lower part of the 30S subunit head. Binds mRNA in the 70S ribosome, positioning it for translation. This Nitratiruptor sp. (strain SB155-2) protein is Small ribosomal subunit protein uS3.